The sequence spans 420 residues: MGMTMTQKILAAHASLDSVKAGDLIMADLDMVLANDITGPVAINVFGTIDKEKVFDKDKIALVPDHFAPAKDIKSAQQCKQVRCFACDQEITNYFEIGEMGIEHALLPEKGLVAAGDVVIGADSHTCTYGALGAFSTGVGSTDMAVGMATGKAWFKVPAALRFNLTGTLNKNVSGKDLILHIIGMIGVDGALYRSMEFTGPGVACLSMDDRFTISNMAIEAGGKNGIFPVDDQTISYMEEHGSGDYKVYAADADAVYEKTFDIDLSQLKSTVAFPHLPENTKTVDAIEEPVTIDQVVIGSCTNGRFEDLKRAADILRGKHVKKGVRMLVIPATHKIYLDAMEAGYLREFIEAGATISTPTCGPCLGGYMGILAEGERCVSTTNRNFVGRMGHVDSEVYLASPEVAAASAILGRIATPDEL.

3 residues coordinate [4Fe-4S] cluster: C301, C361, and C364.

This sequence belongs to the aconitase/IPM isomerase family. LeuC type 2 subfamily. In terms of assembly, heterodimer of a large and a small subunit. Requires [4Fe-4S] cluster as cofactor.

The enzyme catalyses (2R,3S)-2,3-dimethylmalate = dimethylmaleate + H2O. It functions in the pathway cofactor degradation; nicotinate degradation; propanoate and pyruvate from 6-hydroxynicotinate: step 7/8. The chain is 2,3-dimethylmalate dehydratase large subunit (dmdA) from Eubacterium barkeri (Clostridium barkeri).